Consider the following 736-residue polypeptide: Zinc finger CCCH domain-containing protein 14 (736 aa).

M1 carries the N-acetylmethionine modification. 2 stretches are compositionally biased toward polar residues: residues 78–103 (TEPS…SNFS) and 131–145 (VSTS…NVRQ). Residues 78–146 (TEPSSLKSSD…ESKTTNVRQT (69 aa)) form a disordered region. S85 bears the Phosphoserine mark. Glycyl lysine isopeptide (Lys-Gly) (interchain with G-Cter in SUMO2) cross-links involve residues K99, K139, K175, and K198. S240 carries the post-translational modification Phosphoserine. K245 is covalently cross-linked (Glycyl lysine isopeptide (Lys-Gly) (interchain with G-Cter in SUMO2)). S281 is subject to Phosphoserine. Residues K283 and K295 each participate in a glycyl lysine isopeptide (Lys-Gly) (interchain with G-Cter in SUMO2) cross-link. The segment at 310–350 (HDGEEEEEDDDYGSRTGSISSSVSVPAKPERRPSLPPSKQA) is disordered. Residues S327 and S343 each carry the phosphoserine modification. An N6-acetyllysine; alternate modification is found at K357. A Glycyl lysine isopeptide (Lys-Gly) (interchain with G-Cter in SUMO2); alternate cross-link involves residue K357. A Glycyl lysine isopeptide (Lys-Gly) (interchain with G-Cter in SUMO2) cross-link involves residue K378. Phosphoserine occurs at positions 390 and 409. The segment at 398–430 (VVQGQSRTPRISPPIKEEETKGDSVEKNQGTQQ) is disordered. Residues 412-423 (IKEEETKGDSVE) are compositionally biased toward basic and acidic residues. Residue K413 forms a Glycyl lysine isopeptide (Lys-Gly) (interchain with G-Cter in SUMO2) linkage. S421 carries the phosphoserine modification. Residue K489 forms a Glycyl lysine isopeptide (Lys-Gly) (interchain with G-Cter in SUMO2) linkage. S498, S515, S527, and S620 each carry phosphoserine. 5 consecutive C3H1-type zinc fingers follow at residues 595-620 (EKLL…HPIS), 621-640 (PCKA…VHPN), 641-656 (CKYD…PFTH), 682-699 (CRYF…YHPK), and 701-719 (CRFN…HPTI).

It belongs to the ZC3H14 family. As to quaternary structure, homodimer; facilitating circular RNAs (circRNAs) formation. Associates with the spliceosome. Interacts with HOOK2. Interacts with ZFC3H1 in a RNase-sensitive manner.

It localises to the nucleus speckle. Functionally, RNA-binding protein involved in the biogenesis of circular RNAs (circRNAs), which are produced by back-splicing circularization of pre-mRNAs. Acts by binding to both exon-intron boundary and 3'-UTR of pre-mRNAs to promote circRNA biogenesis through dimerization and the association with the spliceosome. Required for spermatogenesis via involvement in circRNA biogenesis. Regulates the pre-mRNA processing of ATP5MC1; preventing its degradation. Also binds the poly(A) tail of mRNAs; controlling poly(A) length in neuronal cells. The chain is Zinc finger CCCH domain-containing protein 14 (ZC3H14) from Macaca fascicularis (Crab-eating macaque).